The following is a 919-amino-acid chain: Probable dipeptidyl-aminopeptidase B (919 aa).

The segment covering 1–10 has biased composition (basic and acidic residues); the sequence is MRRSDGHEET. A disordered region spans residues 1-53; the sequence is MRRSDGHEETSEFLPMTHSRSVSAASQTSTDSSLSTESLFPREQKPFPNAMGG. The Cytoplasmic segment spans residues 1–92; it reads MRRSDGHEET…AATGGGRARR (92 aa). Over residues 21–38 the composition is skewed to low complexity; it reads SVSAASQTSTDSSLSTES. Residues 93 to 113 traverse the membrane as a helical; Signal-anchor for type II membrane protein segment; the sequence is IFWILVLLCLGGWLLAFVLFL. Over 114–919 the chain is Vacuolar; the sequence is TGGRANYQTA…MKRSLRLLSP (806 aa). Residues Asn-200, Asn-352, and Asn-643 are each glycosylated (N-linked (GlcNAc...) asparagine). Ser-757 (charge relay system) is an active-site residue. An N-linked (GlcNAc...) asparagine glycan is attached at Asn-811. Catalysis depends on charge relay system residues Asp-834 and His-867.

Belongs to the peptidase S9B family.

It localises to the vacuole membrane. The enzyme catalyses Release of an N-terminal dipeptide, Xaa-Yaa-|-Zaa-, from a polypeptide, preferentially when Yaa is Pro, provided Zaa is neither Pro nor hydroxyproline.. Its function is as follows. Type IV dipeptidyl-peptidase which removes N-terminal dipeptides sequentially from polypeptides having unsubstituted N-termini provided that the penultimate residue is proline. This is Probable dipeptidyl-aminopeptidase B (dapB) from Aspergillus fumigatus (strain CBS 144.89 / FGSC A1163 / CEA10) (Neosartorya fumigata).